A 321-amino-acid chain; its full sequence is Malate dehydrogenase (321 aa).

Residues 10–15 (GSGMIG) and Asp34 each bind NAD(+). The substrate site is built by Arg83 and Arg89. NAD(+)-binding positions include Asn96 and 119-121 (ITN). Positions 121 and 152 each coordinate substrate. The active-site Proton acceptor is the His176.

Belongs to the LDH/MDH superfamily. MDH type 3 family.

It carries out the reaction (S)-malate + NAD(+) = oxaloacetate + NADH + H(+). Functionally, catalyzes the reversible oxidation of malate to oxaloacetate. The chain is Malate dehydrogenase from Sinorhizobium fredii (strain NBRC 101917 / NGR234).